The chain runs to 554 residues: Hydroxylamine reductase (554 aa).

[2Fe-2S] cluster is bound by residues cysteine 3, cysteine 6, cysteine 18, and cysteine 25. Residues histidine 252, glutamate 276, cysteine 320, cysteine 408, cysteine 436, cysteine 461, glutamate 495, and lysine 497 each coordinate hybrid [4Fe-2O-2S] cluster. Cysteine 408 bears the Cysteine persulfide mark.

This sequence belongs to the HCP family. Requires [2Fe-2S] cluster as cofactor. The cofactor is hybrid [4Fe-2O-2S] cluster.

Its subcellular location is the cytoplasm. It catalyses the reaction A + NH4(+) + H2O = hydroxylamine + AH2 + H(+). Catalyzes the reduction of hydroxylamine to form NH(3) and H(2)O. The protein is Hydroxylamine reductase of Shewanella sp. (strain MR-4).